The primary structure comprises 224 residues: Small ribosomal subunit protein uS3 (224 aa).

In terms of domain architecture, KH type-2 spans 39 to 107 (IREFLKKKPS…DVWVEIAEVK (69 aa)).

Belongs to the universal ribosomal protein uS3 family. In terms of assembly, part of the 30S ribosomal subunit. Forms a tight complex with proteins S10 and S14.

Its function is as follows. Binds the lower part of the 30S subunit head. Binds mRNA in the 70S ribosome, positioning it for translation. The chain is Small ribosomal subunit protein uS3 from Chlamydia trachomatis serovar L2 (strain ATCC VR-902B / DSM 19102 / 434/Bu).